The primary structure comprises 559 residues: Formate--tetrahydrofolate ligase (559 aa).

68–75 (TPAGEGKS) provides a ligand contact to ATP.

Belongs to the formate--tetrahydrofolate ligase family.

The enzyme catalyses (6S)-5,6,7,8-tetrahydrofolate + formate + ATP = (6R)-10-formyltetrahydrofolate + ADP + phosphate. It functions in the pathway one-carbon metabolism; tetrahydrofolate interconversion. This is Formate--tetrahydrofolate ligase from Bacillus licheniformis (strain ATCC 14580 / DSM 13 / JCM 2505 / CCUG 7422 / NBRC 12200 / NCIMB 9375 / NCTC 10341 / NRRL NRS-1264 / Gibson 46).